We begin with the raw amino-acid sequence, 70 residues long: Putative peptide YY-3 (70 aa).

The first 23 residues, 1 to 23, serve as a signal peptide directing secretion; that stretch reads MVSVCRPWPAVAIALLALLVCLG.

This sequence belongs to the NPY family.

It localises to the secreted. The polypeptide is Putative peptide YY-3 (PYY3) (Homo sapiens (Human)).